We begin with the raw amino-acid sequence, 275 residues long: Rhamnulose-1-phosphate aldolase (275 aa).

E117 is an active-site residue. Zn(2+)-binding residues include H141, H143, and H212.

It belongs to the aldolase class II family. RhaD subfamily. As to quaternary structure, homotetramer. It depends on Zn(2+) as a cofactor.

It is found in the cytoplasm. The catalysed reaction is L-rhamnulose 1-phosphate = (S)-lactaldehyde + dihydroxyacetone phosphate. It participates in carbohydrate degradation; L-rhamnose degradation; glycerone phosphate from L-rhamnose: step 3/3. Functionally, catalyzes the reversible cleavage of L-rhamnulose-1-phosphate to dihydroxyacetone phosphate (DHAP) and L-lactaldehyde. This chain is Rhamnulose-1-phosphate aldolase, found in Citrobacter koseri (strain ATCC BAA-895 / CDC 4225-83 / SGSC4696).